The primary structure comprises 699 residues: Endogenous retrovirus group K member 8 Env polyprotein (699 aa).

The interval 1–47 (MNPSEMQRKAPPRRRRHRNRAPLTHKMNKMVTSEEQMKLPSTKKAEP) is disordered. Residues 1–89 (MNPSEMQRKA…ALMIVSMVVS (89 aa)) form the signal peptide. The span at 10–20 (APPRRRRHRNR) shows a compositional bias: basic residues. The Extracellular portion of the chain corresponds to 90–632 (LPMPAGAAVA…NLNPVTWVKT (543 aa)). Residues Asn100, Asn128, Asn153, Asn274, Asn355, Asn372, and Asn461 are each glycosylated (N-linked (GlcNAc...) asparagine). The tract at residues 466–486 (FIFTLIAVIMGLIAVTATAAV) is fusion peptide. N-linked (GlcNAc...) asparagine glycosylation is found at Asn507, Asn554, Asn566, and Asn585. Residues 633–653 (IGSTTIINLILILVCLFCLLL) traverse the membrane as a helical segment. Topologically, residues 654 to 699 (VCRCTQQLRRDSDHRERAMMTMAVLSKRKGGNVGKSKRDQIVTVSV) are cytoplasmic.

It belongs to the beta type-B retroviral envelope protein family. HERV class-II K(HML-2) env subfamily. In terms of assembly, the surface (SU) and transmembrane (TM) proteins form a heterodimer. SU and TM are attached by noncovalent interactions or by a labile interchain disulfide bond. Specific enzymatic cleavages in vivo yield the mature SU and TM proteins.

It is found in the cell membrane. Its subcellular location is the virion. In terms of biological role, retroviral envelope proteins mediate receptor recognition and membrane fusion during early infection. Endogenous envelope proteins may have kept, lost or modified their original function during evolution. This endogenous envelope protein has lost its original fusogenic properties. Functionally, SU mediates receptor recognition. TM anchors the envelope heterodimer to the viral membrane through one transmembrane domain. The other hydrophobic domain, called fusion peptide, mediates fusion of the viral membrane with the target cell membrane. The sequence is that of Endogenous retrovirus group K member 8 Env polyprotein (ERVK-8) from Homo sapiens (Human).